A 290-amino-acid polypeptide reads, in one-letter code: 1D-myo-inositol 2-acetamido-2-deoxy-alpha-D-glucopyranoside deacetylase (290 aa).

Positions 17, 20, and 150 each coordinate Zn(2+).

This sequence belongs to the MshB deacetylase family. The cofactor is Zn(2+).

It carries out the reaction 1D-myo-inositol 2-acetamido-2-deoxy-alpha-D-glucopyranoside + H2O = 1D-myo-inositol 2-amino-2-deoxy-alpha-D-glucopyranoside + acetate. In terms of biological role, catalyzes the deacetylation of 1D-myo-inositol 2-acetamido-2-deoxy-alpha-D-glucopyranoside (GlcNAc-Ins) in the mycothiol biosynthesis pathway. The sequence is that of 1D-myo-inositol 2-acetamido-2-deoxy-alpha-D-glucopyranoside deacetylase from Corynebacterium glutamicum (strain R).